The chain runs to 145 residues: Major pollen allergen Ole e 1 (145 aa).

3 disulfides stabilise this stretch: C19/C90, C22/C131, and C43/C78. N111 is a glycosylation site (N-linked (GlcNAc...) (complex) asparagine; alternate). A glycan (N-linked (GlcNAc...) (high mannose) asparagine; alternate) is linked at N111.

The protein belongs to the Ole e I family. In terms of processing, N-glycosylated; contains high mannose (Man(7)-GlcNAc) and partially fucosylated complex glycans (GlcNAc-Man(3)-Xyl-GlcNAc). Complex glycans may contribute to the antigenicity. Exists both in a glycosylated and in a non-glycosylated form. Ole e 1 and Ole e 1.0103 are the only non-glycosylated isoallergens. Post-translationally, a second potential glycosylation site exists at position 50 in cv. Bella de Espana and cv. Hojiblanca. In terms of tissue distribution, expressed in tapetum and pollen grains. Not detected in petals, roots or leaves.

Its subcellular location is the endoplasmic reticulum. It is found in the secreted. In terms of biological role, may be involved in recognition between pollen-stigma and pollen tube-style cells. The protein is Major pollen allergen Ole e 1 of Olea europaea (Common olive).